The sequence spans 160 residues: Phosphopantetheine adenylyltransferase (160 aa).

Residue threonine 10 participates in substrate binding. ATP-binding positions include 10-11 (TF) and histidine 18. Lysine 42, leucine 74, and arginine 88 together coordinate substrate. ATP contacts are provided by residues 89 to 91 (GLR), glutamate 99, and 124 to 130 (NSFISST).

The protein belongs to the bacterial CoaD family. In terms of assembly, homohexamer. The cofactor is Mg(2+).

The protein resides in the cytoplasm. The enzyme catalyses (R)-4'-phosphopantetheine + ATP + H(+) = 3'-dephospho-CoA + diphosphate. It participates in cofactor biosynthesis; coenzyme A biosynthesis; CoA from (R)-pantothenate: step 4/5. In terms of biological role, reversibly transfers an adenylyl group from ATP to 4'-phosphopantetheine, yielding dephospho-CoA (dPCoA) and pyrophosphate. The sequence is that of Phosphopantetheine adenylyltransferase from Aeromonas hydrophila subsp. hydrophila (strain ATCC 7966 / DSM 30187 / BCRC 13018 / CCUG 14551 / JCM 1027 / KCTC 2358 / NCIMB 9240 / NCTC 8049).